The primary structure comprises 428 residues: MDTIYALASARGKAGVAVLRLSGPQAYEAVAAFGVSLPEVRRAALRRLTWNGEVLDEALILLFAEGASFTGERSAEIHLHGSAAAVSSVLQALSELPGLRLADAGEFTRRALDNGRLDLAQVEGLADLLDSETEAQRRQAMRVFSGAIGKRTERWRSDLIRAAALLEATIDFADEDVPVDVTPEVRGLLERLISDLKREVDGSRVAERIRDGFEVAIIGAPNAGKSTLLNALAQREAAITSEVAGTTRDVIEVRMNLGGLAVTLLDTAGLRETHDPVEALGIDRALTRARAADLRIFLLDQSGEVVGLEPEADDLIVQGKADTRLTRGLSVSGLTGDGIQELVEALQDRLLARTAGAGSFTRERHRLAMERAIRAMESAHVQLMQGVPHPELAAEDLRLALRALDSLVGRVDVEALLGEIFSSFCIGK.

Positions 20, 76, and 116 each coordinate (6S)-5-formyl-5,6,7,8-tetrahydrofolate. Positions 212-351 constitute a TrmE-type G domain; it reads GFEVAIIGAP…LVEALQDRLL (140 aa). Asn222 serves as a coordination point for K(+). Residues 222–227, 241–247, and 266–269 contribute to the GTP site; these read NAGKST, SEVAGTT, and DTAG. Ser226 is a binding site for Mg(2+). Positions 241, 243, and 246 each coordinate K(+). Thr247 is a Mg(2+) binding site. Lys428 contributes to the (6S)-5-formyl-5,6,7,8-tetrahydrofolate binding site.

This sequence belongs to the TRAFAC class TrmE-Era-EngA-EngB-Septin-like GTPase superfamily. TrmE GTPase family. As to quaternary structure, homodimer. Heterotetramer of two MnmE and two MnmG subunits. Requires K(+) as cofactor.

The protein resides in the cytoplasm. Exhibits a very high intrinsic GTPase hydrolysis rate. Involved in the addition of a carboxymethylaminomethyl (cmnm) group at the wobble position (U34) of certain tRNAs, forming tRNA-cmnm(5)s(2)U34. The sequence is that of tRNA modification GTPase MnmE from Cereibacter sphaeroides (strain ATCC 17025 / ATH 2.4.3) (Rhodobacter sphaeroides).